Here is a 1793-residue protein sequence, read N- to C-terminus: Non-reducing polyketide synthase adaA (1793 aa).

The segment at 16–250 (NDDLKALFRG…YSKSLALPVY (235 aa)) is N-terminal acylcarrier protein transacylase domain (SAT). The 434-residue stretch at 388-821 (DSKLAIVGMA…GGNTTLVLED (434 aa)) folds into the Ketosynthase family 3 (KS3) domain. Residues C561, H696, and H739 each act as for beta-ketoacyl synthase activity in the active site. Residues 923 to 1245 (VFTFTGQGAY…KSLCTLHLAG (323 aa)) are malonyl-CoA:ACP transacylase (MAT) domain. Residues 1312–1634 (TSLIHQVTEE…RLLMDRFFSP (323 aa)) form a product template (PT) domain region. The tract at residues 1316 to 1452 (HQVTEETVDK…GSIKYPADPT (137 aa)) is N-terminal hotdog fold. The 314-residue stretch at 1316 to 1629 (HQVTEETVDK…FRRVPRLLMD (314 aa)) folds into the PKS/mFAS DH domain. Residue H1348 is the Proton acceptor; for dehydratase activity of the active site. Residues 1482–1629 (KASTLSKPLA…FRRVPRLLMD (148 aa)) are C-terminal hotdog fold. D1540 functions as the Proton donor; for dehydratase activity in the catalytic mechanism. Over residues 1642-1659 (AAPAPAPAAVPAVKKQPP) the composition is skewed to low complexity. The segment at 1642 to 1714 (AAPAPAPAAV…TTEQEAPVAD (73 aa)) is disordered. A compositionally biased stretch (polar residues) spans 1660–1681 (TETIQPQAPKTEQKQDQLQLPN). Residues 1683 to 1706 (ASAAPSTANSSSSPSSSGVATPTT) are compositionally biased toward low complexity. Residues 1716 to 1793 (SAVTGVAGKC…DLTGWLEQYC (78 aa)) enclose the Carrier domain. Position 1753 is an O-(pantetheine 4'-phosphoryl)serine (S1753).

Requires pantetheine 4'-phosphate as cofactor.

It catalyses the reaction holo-[ACP] + 9 malonyl-CoA + acetyl-CoA + 9 H(+) = 3-(2,4-dioxopentyl)-3,6,8,9-tetrahydroxy-1-oxo-1,2,3,4-tetrahydroanthracene-2-carboxyl-[ACP] + 9 CO2 + 10 CoA + 2 H2O. The protein operates within secondary metabolite biosynthesis. Non-reducing polyketide synthase; part of the gene cluster that mediates the biosynthesis of the linear tetracyclic TAN-1612 neuropeptide Y receptor antagonist. The decaketide backbone of TAN-1612 is synthesized by the non-reducing polyketide synthase adaA via condensation of one acetyl-CoA starter unit with 9 malonyl-CoA units. The FAD-dependent monooxygenase adaC then performs hydroxylation at C2 while the polaketide chain is still attached to the NRPKS adaA. The alpha-hydroxylation step at C2 appears to be crucial for the following C18-C1 Claisen cyclization and release of the C9-hydroxyl version of TAN-1612 from the NRPKS adaA, two steps performed by the lactamase-like protein adaB. Finally, the O-methyltransferase adaD performs the C9 O-methylation to complete the biosynthesis of TAN-1612. The sequence is that of Non-reducing polyketide synthase adaA from Aspergillus niger (strain ATCC MYA-4892 / CBS 513.88 / FGSC A1513).